Here is a 777-residue protein sequence, read N- to C-terminus: Glucocorticoid receptor (777 aa).

Residues 1 to 14 (MDSKESLTPGKEEN) are compositionally biased toward basic and acidic residues. A disordered region spans residues 1-22 (MDSKESLTPGKEENPSSVLTQE). The segment at 1-420 (MDSKESLTPG…TATTGPPPKL (420 aa)) is modulating. At threonine 8 the chain carries Phosphothreonine. Residue arginine 23 is modified to Omega-N-methylarginine. 4 positions are modified to phosphoserine: serine 45, serine 113, serine 134, and serine 141. A disordered region spans residues 130–182 (NRSTSVPENPKSSASSSVSAAPKEKEFPKTHSDVSSEQQNLKGQTGSNGGNVK). The span at 134–150 (SVPENPKSSASSSVSAA) shows a compositional bias: low complexity. Positions 151 to 163 (PKEKEFPKTHSDV) are enriched in basic and acidic residues. Positions 164–174 (SSEQQNLKGQT) are enriched in polar residues. A phosphoserine mark is found at serine 203, serine 211, and serine 226. Lysine 258 is covalently cross-linked (Glycyl lysine isopeptide (Lys-Gly) (interchain with G-Cter in SUMO2)). Phosphoserine is present on serine 267. Glycyl lysine isopeptide (Lys-Gly) (interchain with G-Cter in SUMO); alternate cross-links involve residues lysine 277 and lysine 293. Residues lysine 277 and lysine 293 each participate in a glycyl lysine isopeptide (Lys-Gly) (interchain with G-Cter in SUMO2); alternate cross-link. A compositionally biased stretch (low complexity) spans 394-414 (SSPSMRPDVSSPPSSSSTATT). Residues 394–415 (SSPSMRPDVSSPPSSSSTATTG) form a disordered region. Residue serine 404 is modified to Phosphoserine. Lysine 419 participates in a covalent cross-link: Glycyl lysine isopeptide (Lys-Gly) (interchain with G-Cter in ubiquitin). 2 NR C4-type zinc fingers span residues 421 to 441 (CLVC…CGSC) and 457 to 481 (CAGR…YRKC). The segment at residues 421–486 (CLVCSDEASG…RYRKCLQAGM (66 aa)) is a DNA-binding region (nuclear receptor). N6-acetyllysine is present on residues lysine 480, lysine 492, lysine 494, and lysine 495. An interaction with CLOCK region spans residues 485–777 (GMNLEARKTK…NIKKLLFHQK (293 aa)). The hinge stretch occupies residues 487–523 (NLEARKTKKKIKGIQQATTGVSQETSENPANKTIVPA). The region spanning 524–758 (TLPQLTPTLV…FPEMLAEIIT (235 aa)) is the NR LBD domain. The tract at residues 532–697 (LVSLLEVIEP…EIRMTYIKEL (166 aa)) is interaction with CRY1. Lysine 703 is covalently cross-linked (Glycyl lysine isopeptide (Lys-Gly) (interchain with G-Cter in SUMO)).

The protein belongs to the nuclear hormone receptor family. NR3 subfamily. Heteromultimeric cytoplasmic complex with HSP90AA1, HSPA1A/HSPA1B, and FKBP5 or another immunophilin such as PPID, STIP1, or the immunophilin homolog PPP5C. Upon ligand binding FKBP5 dissociates from the complex and FKBP4 takes its place, thereby linking the complex to dynein and mediating transport to the nucleus, where the complex dissociates. Probably forms a complex composed of chaperones HSP90 and HSP70, co-chaperones CDC37, PPP5C, TSC1 and client protein TSC2, CDK4, AKT, RAF1 and NR3C1; this complex does not contain co-chaperones STIP1/HOP and PTGES3/p23. Directly interacts with UNC45A. Binds to DNA as a homodimer, and as heterodimer with NR3C2 or the retinoid X receptor. Binds STAT5A and STAT5B homodimers and heterodimers. Interacts with NRIP1, POU2F1, POU2F2 and TRIM28. Interacts with several coactivator complexes, including the SMARCA4 complex, CREBBP/EP300, TADA2L (Ada complex) and p160 coactivators such as NCOA2 and NCOA6. Interaction with BAG1 inhibits transactivation. Interacts with HEXIM1 and TGFB1I1. Interacts with NCOA1. Interacts with NCOA3, SMARCA4, SMARCC1, SMARCD1, and SMARCE1. Interacts with CLOCK, CRY1 and CRY2 in a ligand-dependent fashion. Interacts with CIART. Interacts with RWDD3. Interacts with UBE2I/UBC9 and this interaction is enhanced in the presence of RWDD3. Interacts with GRIP1. Interacts with NR4A3 (via nuclear receptor DNA-binding domain), represses transcription activity of NR4A3 on the POMC promoter Nur response element (NurRE). Directly interacts with PNRC2 to attract and form a complex with UPF1 and DCP1A; the interaction leads to rapid mRNA degradation. Interacts with GSK3B. Interacts with FNIP1 and FNIP2. Interacts (via C-terminus) with HNRNPU (via C-terminus). Interacts with MCM3AP. Interacts (via domain NR LBD) with HSP90AA1 and HSP90AB1. In the absence of hormonal ligand, interacts with TACC1. Interacts (via NR LBD domain) with ZNF764 (via KRAB domain); the interaction regulates transcription factor activity of NR3C1 by directing its actions toward certain biologic pathways. Acetylation by CLOCK reduces its binding to glucocorticoid response elements and its transcriptional activity. In terms of processing, increased proteasome-mediated degradation in response to glucocorticoids. Post-translationally, phosphorylated in the absence of hormone; becomes hyperphosphorylated in the presence of glucocorticoid. The Ser-203, Ser-226 and Ser-404-phosphorylated forms are mainly cytoplasmic, and the Ser-211-phosphorylated form is nuclear. Phosphorylation at Ser-211 increases transcriptional activity. Phosphorylation at Ser-203, Ser-226 and Ser-404 decreases signaling capacity. Phosphorylation at Ser-404 may protect from glucocorticoid-induced apoptosis. Phosphorylation at Ser-203 and Ser-211 is not required in regulation of chromosome segregation. May be dephosphorylated by PPP5C, attenuates NR3C1 action. Ubiquitinated by UBR5, leading to its degradation: UBR5 specifically recognizes and binds ligand-bound NR3C1 when it is not associated with coactivators (NCOAs). In presence of NCOAs, the UBR5-degron is not accessible, preventing its ubiquitination and degradation. In terms of processing, sumoylation at Lys-277 and Lys-293 negatively regulates its transcriptional activity. Sumoylation at Lys-703 positively regulates its transcriptional activity in the presence of RWDD3. Sumoylation at Lys-277 and Lys-293 is dispensable whereas sumoylation at Lys-703 is critical for the stimulatory effect of RWDD3 on its transcriptional activity. Heat shock increases sumoylation in a RWDD3-dependent manner.

It localises to the cytoplasm. Its subcellular location is the nucleus. It is found in the mitochondrion. The protein localises to the cytoskeleton. The protein resides in the spindle. It localises to the microtubule organizing center. Its subcellular location is the centrosome. It is found in the chromosome. The protein localises to the nucleoplasm. Receptor for glucocorticoids (GC). Has a dual mode of action: as a transcription factor that binds to glucocorticoid response elements (GRE), both for nuclear and mitochondrial DNA, and as a modulator of other transcription factors. Affects inflammatory responses, cellular proliferation and differentiation in target tissues. Involved in chromatin remodeling. Plays a role in rapid mRNA degradation by binding to the 5' UTR of target mRNAs and interacting with PNRC2 in a ligand-dependent manner which recruits the RNA helicase UPF1 and the mRNA-decapping enzyme DCP1A, leading to RNA decay. Could act as a coactivator for STAT5-dependent transcription upon growth hormone (GH) stimulation and could reveal an essential role of hepatic GR in the control of body growth. Mediates glucocorticoid-induced apoptosis. Promotes accurate chromosome segregation during mitosis. May act as a tumor suppressor. May play a negative role in adipogenesis through the regulation of lipolytic and antilipogenic gene expression. In Saimiri boliviensis boliviensis (Bolivian squirrel monkey), this protein is Glucocorticoid receptor (NR3C1).